Here is a 105-residue protein sequence, read N- to C-terminus: U1-sicaritoxin-Li1b (105 aa).

The N-terminal stretch at 1 to 19 (MKLLFEGLLVLVLIAFVVA) is a signal peptide. Residues 20–36 (EFESDAEKWEALITQER) constitute a propeptide that is removed on maturation. 4 disulfides stabilise this stretch: cysteine 38-cysteine 55, cysteine 46-cysteine 60, cysteine 54-cysteine 73, and cysteine 62-cysteine 71. Arginine 82 is subject to Arginine amide. The propeptide occupies 86-105 (ALMVDPETHRMLSLHRLSEE).

This sequence belongs to the neurotoxin 28 (Litx) family. Expressed by the venom gland.

It is found in the secreted. Functionally, toxin active against insects (S.frugiperda larvae). May act on sodium (Nav) or calcium (Cav) channels. The protein is U1-sicaritoxin-Li1b of Loxosceles intermedia (Brown spider).